The following is a 68-amino-acid chain: uncharacterized protein (68 aa).

The signal sequence occupies residues 1-15; it reads MTIIFLICLDASTQS. The tract at residues 14 to 68 is disordered; the sequence is QSTTNNSINNNNNNNNNNNNNNNNNNNNNNNNNNNNNNNNNNNNNNSKVFDFNIF. N-linked (GlcNAc...) asparagine glycans are attached at residues N18 and N58. The segment covering 22–59 has biased composition (low complexity); that stretch reads NNNNNNNNNNNNNNNNNNNNNNNNNNNNNNNNNNNNNN.

The protein localises to the secreted. This is an uncharacterized protein from Dictyostelium discoideum (Social amoeba).